Consider the following 450-residue polypeptide: Tubulin alpha-1 chain (450 aa).

Residues Q11, E71, G144, T145, T179, N206, and N228 each contribute to the GTP site. E71 contributes to the Mg(2+) binding site. E254 is a catalytic residue.

This sequence belongs to the tubulin family. Dimer of alpha and beta chains. A typical microtubule is a hollow water-filled tube with an outer diameter of 25 nm and an inner diameter of 15 nM. Alpha-beta heterodimers associate head-to-tail to form protofilaments running lengthwise along the microtubule wall with the beta-tubulin subunit facing the microtubule plus end conferring a structural polarity. Microtubules usually have 13 protofilaments but different protofilament numbers can be found in some organisms and specialized cells. Mg(2+) is required as a cofactor. Undergoes a tyrosination/detyrosination cycle, the cyclic removal and re-addition of a C-terminal tyrosine residue by the enzymes tubulin tyrosine carboxypeptidase (TTCP) and tubulin tyrosine ligase (TTL), respectively.

It is found in the cytoplasm. The protein localises to the cytoskeleton. It carries out the reaction GTP + H2O = GDP + phosphate + H(+). In terms of biological role, tubulin is the major constituent of microtubules, a cylinder consisting of laterally associated linear protofilaments composed of alpha- and beta-tubulin heterodimers. Microtubules grow by the addition of GTP-tubulin dimers to the microtubule end, where a stabilizing cap forms. Below the cap, tubulin dimers are in GDP-bound state, owing to GTPase activity of alpha-tubulin. This Hordeum vulgare (Barley) protein is Tubulin alpha-1 chain (TUBA1).